A 250-amino-acid polypeptide reads, in one-letter code: Snake venom serine protease pictobin (250 aa).

The first 11 residues, Ala1–Ala11, serve as a signal peptide directing secretion. Residues Gln12–Leu17 constitute a propeptide that is removed on maturation. The region spanning Val18–Ala241 is the Peptidase S1 domain. Disulfide bonds link Cys24–Cys155, Cys42–Cys58, Cys134–Cys202, Cys166–Cys181, and Cys192–Cys217. Catalysis depends on His57, which acts as the Charge relay system. N-linked (GlcNAc...) asparagine glycosylation is found at Asn71 and Asn95. Asp102 acts as the Charge relay system in catalysis. Asn146 and Asn162 each carry an N-linked (GlcNAc...) asparagine glycan. Ser196 serves as the catalytic Charge relay system. A glycan (N-linked (GlcNAc...) asparagine) is linked at Asn243.

The protein belongs to the peptidase S1 family. Snake venom subfamily. In terms of assembly, monomer. As to expression, expressed by the venom gland.

The protein resides in the secreted. Snake venom serine protease that may impair the hemostatic system of the prey. The protein is Snake venom serine protease pictobin of Bothrops pictus (Desert lancehead).